The primary structure comprises 505 residues: Transcription factor APG (505 aa).

Disordered stretches follow at residues 1–40 (MLRG…CSAA), 61–99 (GAAN…DTAP), 119–156 (PAAA…SGGG), 169–242 (PLQQ…APTT), 256–312 (AQRL…SQDE), 324–344 (RRSA…NLSE), and 469–505 (PPPP…VKQA). The span at 23-33 (PLRPPPPPPFQ) shows a compositional bias: pro residues. Polar residues predominate over residues 131–144 (CSSSHGAVVPSTSA). The span at 174–199 (PSGGETASASASAAATSTVPVESTVV) shows a compositional bias: low complexity. Residues 200 to 212 (QAATNRLRSTPLF) show a composition bias toward polar residues. Positions 222–239 (PPKPSPRAAAPPPPPPLA) are enriched in pro residues. Basic and acidic residues predominate over residues 288–299 (GDRRQLNWRDSH). Residues 300 to 310 (NNQSAEWSASQ) are compositionally biased toward polar residues. A compositionally biased stretch (basic residues) spans 324–334 (RRSAARSSKRS). A compositionally biased stretch (basic and acidic residues) spans 335-344 (RTAEVHNLSE). Residues 335-384 (RTAEVHNLSERRRRDRINEKMRALQELIPNCNKIDKASMLEEAIEYLKTL) form the bHLH domain. Residues 492-505 (GAADAGNAPAVKQA) show a composition bias toward low complexity.

The protein belongs to the bHLH protein family. In terms of assembly, homodimer and heterodimer with ILI5 or ILI6.

The protein localises to the nucleus. Functionally, atypical bHLH transcription factor that acts as a negative regulator of grain size. Binds the transcription factor ILI6 and forms a heterodimer of antagonistic bHLH transcription factors that regulates grain length and weight by controlling cell elongation in lemma and palea. May be involved in the control of lamina inclination through brassinosteroid signaling pathway. The sequence is that of Transcription factor APG (APG) from Oryza sativa subsp. japonica (Rice).